The sequence spans 425 residues: Intermediate conductance calcium-activated potassium channel protein 4 (425 aa).

The chain crosses the membrane as a helical span at residues Leu30 to Leu50. A helical membrane pass occupies residues Leu59–Phe79. A helical membrane pass occupies residues Val105 to Pro121. A helical membrane pass occupies residues Gly141–Val161. The chain crosses the membrane as a helical span at residues Leu205–Glu225. An intramembrane region (pore-forming) is located at residues Leu239–Leu259. The chain crosses the membrane as a helical span at residues Ile263–Val283. The tract at residues Ala284–Ala345 is calmodulin-binding. His356 carries the post-translational modification Phosphohistidine.

It belongs to the potassium channel KCNN family. KCa3.1/KCNN4 subfamily. Homodimer. Homotetramer. Heterotetramer of potassium channel proteins. Interacts with MTMR6; this interaction leads to selective dephosphorylation of PI(3)P in a lipid microdomain adjacent to KCNN4, resulting in a decrease of intermediate conductance calcium-activated potassium channel activity. Interacts (via the C-tail domain) with CALM1; the calmodulin binding is constitutive, does not require calcium and mediates calcium-dependent gating and four calmodulin molecules bind to one channel tetramer. Phosphorylation at His-356 by NDKB activates the intermediate conductance calcium-activated potassium channel activity, and conversely it's dephosphorylation by PHPT1 inhibits this activity.

The protein localises to the cell membrane. Its subcellular location is the cell projection. It localises to the ruffle membrane. The enzyme catalyses K(+)(in) = K(+)(out). Intermediate conductance calcium-activated potassium channel that mediates the voltage-independent transmembrane transfer of potassium across the cell membrane through a constitutive interaction with calmodulin which binds the intracellular calcium allowing its opening. The current is characterized by a voltage-independent activation, an intracellular calcium concentration increase-dependent activation and a single-channel conductance of about 25 picosiemens. Also presents an inwardly rectifying current, thus reducing its already small outward conductance of potassium ions, which is particularly the case when the membrane potential displays positive values, above + 20 mV. Controls calcium influx during vascular contractility by being responsible of membrane hyperpolarization induced by vasoactive factors in proliferative vascular smooth muscle cell types. Following calcium influx, the consecutive activation of KCNN4 channel leads to a hyperpolarization of the cell membrane potential and hence an increase of the electrical driving force for further calcium influx promoting sustained calcium entry in response to stimulation with chemotactic peptides. Required for maximal calcium influx and proliferation during the reactivation of naive T-cells. Plays a role in the late stages of EGF-induced macropinocytosis through activation by PI(3)P. This Rattus norvegicus (Rat) protein is Intermediate conductance calcium-activated potassium channel protein 4.